We begin with the raw amino-acid sequence, 1011 residues long: Ankyrin repeat domain-containing protein 18B (1011 aa).

ANK repeat units lie at residues 67-96 (KDRT…QINI), 100-129 (LNRT…NPNI), 133-162 (YGNT…NIEA), 166-195 (EGNT…NIHA), and 199-228 (FKRT…HISS). 2 disordered regions span residues 264 to 330 (LRND…GKKK) and 533 to 554 (MHPN…SEER). Coiled coils occupy residues 277 to 319 (ENLK…ENKQ), 385 to 639 (NEEM…ELVD), 692 to 722 (ISLL…CLEM), and 752 to 908 (FKKL…EAFA). The span at 280-293 (KKRKKRKKLKKRKE) shows a compositional bias: basic residues. Positions 294–319 (GAKAEHNLKVASEEKQERLERSENKQ) are enriched in basic and acidic residues.

The protein is Ankyrin repeat domain-containing protein 18B (ANKRD18B) of Homo sapiens (Human).